Here is a 279-residue protein sequence, read N- to C-terminus: 1-(5-phosphoribosyl)-5-[(5-phosphoribosylamino)methylideneamino] imidazole-4-carboxamide isomerase (279 aa).

It belongs to the HisA/HisF family.

It is found in the cytoplasm. The catalysed reaction is 1-(5-phospho-beta-D-ribosyl)-5-[(5-phospho-beta-D-ribosylamino)methylideneamino]imidazole-4-carboxamide = 5-[(5-phospho-1-deoxy-D-ribulos-1-ylimino)methylamino]-1-(5-phospho-beta-D-ribosyl)imidazole-4-carboxamide. The protein operates within amino-acid biosynthesis; L-histidine biosynthesis; L-histidine from 5-phospho-alpha-D-ribose 1-diphosphate: step 4/9. This Candida albicans (Yeast) protein is 1-(5-phosphoribosyl)-5-[(5-phosphoribosylamino)methylideneamino] imidazole-4-carboxamide isomerase (HIS6).